The chain runs to 562 residues: MASWRCLELARGVGTSILFREAAALGSLKWKRTATAAGASQITNCLHSVASNSKREPRPVKTRVMTQERGSGETQTTADKYEAVIGIETHVQLGTSTKAFCSCPSEYGSEPNANVCPVCMGLPGALPVLNAAVVESGVKLGLALQANIALKSKFDRKQYFYPDLPKGYQISQFDIPIAEKGYIDVDLPVEFGGGHRRFGVTRVHMEEDAGKLIHAGNDRLSGSSSSQVDLNRAGVPLLEVVSEPEMRTGLEAAEYAAELQRMVRYLGISNGNMQEGSMRCDVNISIRPKGREQFGTKVEIKNMNSFSAMQKAIEFEMDRQIALLEEGERIKQETRLWEEGSQQTISMRSKEGLADYRYFPEPDLPEVVLSQEYIDTTRANLPELPDAKRRRYESLGLSMQDTLVLANDSDVAAFFDEVLEKGTEVKQAANWIMGDVAAHLKSIKLTITEAKLTPASLAELIGLIKDGTISGKIAKEILPELIEKGGSAKGAVESKGLSQISDPAVIESMVDKILADNVKQVEAYRGGKTKLQGFFVGQAMKASGGRVNPGLLNKILMAKLNG.

Residues 48–76 are disordered; that stretch reads SVASNSKREPRPVKTRVMTQERGSGETQT. Over residues 64–76 the composition is skewed to polar residues; the sequence is VMTQERGSGETQT.

The protein belongs to the GatB/GatE family. GatB subfamily. Subunit of the heterotrimeric GatCAB amidotransferase (AdT) complex, composed of A, B and C subunits.

The protein localises to the mitochondrion. Its subcellular location is the plastid. The protein resides in the chloroplast. The catalysed reaction is L-glutamyl-tRNA(Gln) + L-glutamine + ATP + H2O = L-glutaminyl-tRNA(Gln) + L-glutamate + ADP + phosphate + H(+). Functionally, allows the formation of correctly charged Gln-tRNA(Gln) through the transamidation of misacylated Glu-tRNA(Gln) in chloroplasts and mitochondria. The reaction takes place in the presence of glutamine and ATP through an activated gamma-phospho-Glu-tRNA(Gln). This chain is Glutamyl-tRNA(Gln) amidotransferase subunit B, chloroplastic/mitochondrial, found in Physcomitrium patens (Spreading-leaved earth moss).